The sequence spans 145 residues: Maximins 3/H11 type 3 (145 aa).

Positions 1–18 are cleaved as a signal peptide; it reads MNFKYIVAVSFLIASAYA. Propeptides lie at residues 19 to 43 and 75 to 122; these read RSVQ…LREI and TAEE…TKKE. Isoleucine amide is present on I144.

This sequence belongs to the bombinin family. In terms of tissue distribution, expressed by the skin glands.

Its subcellular location is the secreted. Functionally, maximin-3 shows antibacterial activity against both Gram-positive and Gram-negative bacteria. It also shows antimicrobial activity against the fungus C.albicans, but not against A.flavus nor P.uticale. It has little hemolytic activity. It possess a significant cytotoxicity against tumor cell lines. It possess a significant anti-HIV activity. It shows high spermicidal activity. Maximin-H11 shows antimicrobial activity against bacteria and against the fungus C.albicans. Shows strong hemolytic activity. The protein is Maximins 3/H11 type 3 of Bombina maxima (Giant fire-bellied toad).